A 224-amino-acid chain; its full sequence is UPF0758 protein BLi02933/BL00636 (224 aa).

An MPN domain is found at 102–224 (VIRFPEDAAN…FVSLKEKGYL (123 aa)). The Zn(2+) site is built by histidine 173, histidine 175, and aspartate 186. The JAMM motif signature appears at 173-186 (HNHPSGDPAPSRED).

Belongs to the UPF0758 family.

This chain is UPF0758 protein BLi02933/BL00636, found in Bacillus licheniformis (strain ATCC 14580 / DSM 13 / JCM 2505 / CCUG 7422 / NBRC 12200 / NCIMB 9375 / NCTC 10341 / NRRL NRS-1264 / Gibson 46).